The sequence spans 397 residues: Gastric triacylglycerol lipase (397 aa).

Residues 1–19 form the signal peptide; sequence MWWLLVTVCFIHMSGNAFC. The N-linked (GlcNAc...) asparagine glycan is linked to N33. Residues 77–376 form the AB hydrolase-1 domain; the sequence is PVVFLQHGLL…PNYNHLDFIW (300 aa). Residue S171 is the Nucleophile of the active site. C245 and C254 are disulfide-bonded. 2 N-linked (GlcNAc...) asparagine glycosylation sites follow: N270 and N326. Catalysis depends on charge relay system residues D342 and H371.

This sequence belongs to the AB hydrolase superfamily. Lipase family.

It localises to the secreted. The enzyme catalyses a triacylglycerol + H2O = a diacylglycerol + a fatty acid + H(+). The catalysed reaction is 1,2,3-tri-(9Z-octadecenoyl)-glycerol + H2O = 1,2-di-(9Z-octadecenoyl)-sn-glycerol + (9Z)-octadecenoate + H(+). It carries out the reaction 1,2,3-trioctanoylglycerol + H2O = 1,2-dioctanoyl-sn-glycerol + octanoate + H(+). Inhibited by diethylp-nitrophenyl phosphate but not inhibited by thiol reagents 5,5'-dithiobis(2-nitrobenzoic acid) or 4,4'-dithiopyridine. Functionally, catalyzes the hydrolysis of triacylglycerols to yield free fatty acids, diacylglycerol, monoacylglycerol, and glycerol. Shows a preferential hydrolysis at the sn-3 position of triacylglycerol. The protein is Gastric triacylglycerol lipase (LIPF) of Bos taurus (Bovine).